Consider the following 436-residue polypeptide: 3-ketoacyl-CoA thiolase (436 aa).

The active-site Acyl-thioester intermediate is the C99. Active-site proton acceptor residues include H392 and C422.

This sequence belongs to the thiolase-like superfamily. Thiolase family. In terms of assembly, heterotetramer of two alpha chains (FadJ) and two beta chains (FadI).

It is found in the cytoplasm. The enzyme catalyses an acyl-CoA + acetyl-CoA = a 3-oxoacyl-CoA + CoA. It functions in the pathway lipid metabolism; fatty acid beta-oxidation. Its function is as follows. Catalyzes the final step of fatty acid oxidation in which acetyl-CoA is released and the CoA ester of a fatty acid two carbons shorter is formed. This chain is 3-ketoacyl-CoA thiolase, found in Shewanella amazonensis (strain ATCC BAA-1098 / SB2B).